The following is a 119-amino-acid chain: MRPDYRKAMLESEIMKLITEALREAKDPKISGQIITISRVELSNDKRFADVYVSAMGDKDERVKTVEYLDKIKGYFRTYLANNLDLYTAPQIRFKEDPGIEASVRIQELLNKIKEEETQ.

This sequence belongs to the RbfA family. As to quaternary structure, monomer. Binds 30S ribosomal subunits, but not 50S ribosomal subunits or 70S ribosomes.

The protein resides in the cytoplasm. In terms of biological role, one of several proteins that assist in the late maturation steps of the functional core of the 30S ribosomal subunit. Associates with free 30S ribosomal subunits (but not with 30S subunits that are part of 70S ribosomes or polysomes). Required for efficient processing of 16S rRNA. May interact with the 5'-terminal helix region of 16S rRNA. In Pseudothermotoga lettingae (strain ATCC BAA-301 / DSM 14385 / NBRC 107922 / TMO) (Thermotoga lettingae), this protein is Ribosome-binding factor A.